Here is a 205-residue protein sequence, read N- to C-terminus: Molybdenum cofactor guanylyltransferase (205 aa).

Residues 14–16 (LAG), Lys-27, Asp-77, and Asp-107 each bind GTP. Asp-107 contacts Mg(2+).

Belongs to the MobA family. In terms of assembly, monomer. Mg(2+) is required as a cofactor.

The protein localises to the cytoplasm. The catalysed reaction is Mo-molybdopterin + GTP + H(+) = Mo-molybdopterin guanine dinucleotide + diphosphate. Its function is as follows. Transfers a GMP moiety from GTP to Mo-molybdopterin (Mo-MPT) cofactor (Moco or molybdenum cofactor) to form Mo-molybdopterin guanine dinucleotide (Mo-MGD) cofactor. The sequence is that of Molybdenum cofactor guanylyltransferase from Burkholderia lata (strain ATCC 17760 / DSM 23089 / LMG 22485 / NCIMB 9086 / R18194 / 383).